We begin with the raw amino-acid sequence, 448 residues long: MANVVENLGKLERRVTISLPKDTVQKEIDARIQKLAKNVRMPGFRPGKVPLKMVAQQYSGQVEAEVLSDKIGQEFFTISRAENLRVAGQPSFEPKQEQAEDAYAFDATFEVYPEVKIGDLATAEVERSTTTIGDAEIDRTLDILRKQRVHFHARGEAGEHGDGGADTAAKNGDRVTVDFVGKIDDVAFQGGTAEDFPFVLGEGRMLPEFETAALGLKVGEQRTFDLKFPDDYHGKDVAGKTAQFTVTMKKIEWPHLPEIDAEFAKSLGIEDGDLTKMRAEIKENLEREAKRRTQSIVKNQVMDALLKISELDVPKALIEQDQQRLVEMARQDLAQRGVPNAKDAPIPAEMFAEQAERRVKLGLVLAELVKANGLEAKPEQIRAEVDEFAKSYEDPKEVVRWYYSNQQRLAEMEAFVVESNVVDFVLGKAKVTDKEVSFEALASASAQA.

One can recognise a PPIase FKBP-type domain in the interval 172–257; that stretch reads GDRVTVDFVG…MKKIEWPHLP (86 aa).

This sequence belongs to the FKBP-type PPIase family. Tig subfamily.

The protein resides in the cytoplasm. It carries out the reaction [protein]-peptidylproline (omega=180) = [protein]-peptidylproline (omega=0). In terms of biological role, involved in protein export. Acts as a chaperone by maintaining the newly synthesized protein in an open conformation. Functions as a peptidyl-prolyl cis-trans isomerase. The protein is Trigger factor of Burkholderia cenocepacia (strain ATCC BAA-245 / DSM 16553 / LMG 16656 / NCTC 13227 / J2315 / CF5610) (Burkholderia cepacia (strain J2315)).